Reading from the N-terminus, the 259-residue chain is 3-methyl-2-oxobutanoate hydroxymethyltransferase (259 aa).

Residues D44 and D83 each coordinate Mg(2+). 3-methyl-2-oxobutanoate is bound by residues 44 to 45, D83, and K113; that span reads DS. E115 lines the Mg(2+) pocket. E183 functions as the Proton acceptor in the catalytic mechanism.

The protein belongs to the PanB family. In terms of assembly, homodecamer; pentamer of dimers. It depends on Mg(2+) as a cofactor.

It is found in the cytoplasm. It catalyses the reaction 3-methyl-2-oxobutanoate + (6R)-5,10-methylene-5,6,7,8-tetrahydrofolate + H2O = 2-dehydropantoate + (6S)-5,6,7,8-tetrahydrofolate. It participates in cofactor biosynthesis; (R)-pantothenate biosynthesis; (R)-pantoate from 3-methyl-2-oxobutanoate: step 1/2. In terms of biological role, catalyzes the reversible reaction in which hydroxymethyl group from 5,10-methylenetetrahydrofolate is transferred onto alpha-ketoisovalerate to form ketopantoate. In Acaryochloris marina (strain MBIC 11017), this protein is 3-methyl-2-oxobutanoate hydroxymethyltransferase.